We begin with the raw amino-acid sequence, 145 residues long: Peptidyl-prolyl cis-trans isomerase (145 aa).

In terms of domain architecture, PPIase cyclophilin-type spans 1–145; sequence MTQAILETEK…LSVKIVTDAA (145 aa).

The protein belongs to the cyclophilin-type PPIase family.

The enzyme catalyses [protein]-peptidylproline (omega=180) = [protein]-peptidylproline (omega=0). In terms of biological role, PPIases accelerate the folding of proteins. It catalyzes the cis-trans isomerization of proline imidic peptide bonds in oligopeptides. This Synechococcus elongatus (strain ATCC 33912 / PCC 7942 / FACHB-805) (Anacystis nidulans R2) protein is Peptidyl-prolyl cis-trans isomerase (rot).